Consider the following 59-residue polypeptide: UPF0434 protein VV1_2087 (59 aa).

The protein belongs to the UPF0434 family.

The sequence is that of UPF0434 protein VV1_2087 from Vibrio vulnificus (strain CMCP6).